Reading from the N-terminus, the 465-residue chain is ATP synthase subunit beta (465 aa).

An ATP-binding site is contributed by G152–T159.

The protein belongs to the ATPase alpha/beta chains family. As to quaternary structure, F-type ATPases have 2 components, CF(1) - the catalytic core - and CF(0) - the membrane proton channel. CF(1) has five subunits: alpha(3), beta(3), gamma(1), delta(1), epsilon(1). CF(0) has three main subunits: a(1), b(2) and c(9-12). The alpha and beta chains form an alternating ring which encloses part of the gamma chain. CF(1) is attached to CF(0) by a central stalk formed by the gamma and epsilon chains, while a peripheral stalk is formed by the delta and b chains.

The protein localises to the cell membrane. The enzyme catalyses ATP + H2O + 4 H(+)(in) = ADP + phosphate + 5 H(+)(out). Functionally, produces ATP from ADP in the presence of a proton gradient across the membrane. The catalytic sites are hosted primarily by the beta subunits. This Desulfitobacterium hafniense (strain Y51) protein is ATP synthase subunit beta.